The primary structure comprises 424 residues: Zinc metalloproteinase-disintegrin-like brevilysin H2a (424 aa).

Pyrrolidone carboxylic acid is present on Q1. Residues 9 to 207 form the Peptidase M12B domain; it reads RYVKLAIVAD…YKPQCILNEP (199 aa). The N-linked (GlcNAc...) asparagine glycan is linked to N69. D96 is a Ca(2+) binding site. Intrachain disulfides connect C120/C202, C164/C186, and C166/C169. H145 lines the Zn(2+) pocket. E146 is an active-site residue. H149 and H155 together coordinate Zn(2+). N185 carries an N-linked (GlcNAc...) asparagine glycan. Ca(2+) contacts are provided by C202, N205, V217, N220, L222, E224, E227, and D230. Residues 215–301 form the Disintegrin domain; sequence PPVCGNELLE…DCPTDDLQRN (87 aa). 14 disulfides stabilise this stretch: C218–C247, C229–C242, C231–C237, C241–C264, C255–C261, C260–C286, C273–C293, C280–C312, C305–C317, C324–C374, C339–C385, C352–C362, C369–C411, and C405–C417. Positions 279 to 281 match the D/ECD-tripeptide motif; that stretch reads DCD. Positions 281, 284, and 296 each coordinate Ca(2+). N331 carries an N-linked (GlcNAc...) asparagine glycan.

This sequence belongs to the venom metalloproteinase (M12B) family. P-III subfamily. P-IIIa sub-subfamily. In terms of assembly, monomer. The cofactor is Zn(2+). Post-translationally, glycosylated. As to expression, expressed by the venom gland.

It localises to the secreted. With respect to regulation, its proteolytic activity is inhibited by EDTA, TPEN, 1,10-phenanthroline, and some thiol compounds, but is enhanced by alkaline earth metal ions (Mg2+, Ca2+, Sr2+, and Ba2+). Its activity is not modulated by urea (4 M). Functionally, non-hemorrhagic metalloproteinase that degrades fibrinogen. The alpha chain (FGA) is rapidly degraded, the beta chain (FGB) is degraded very slowly, while the gamma chain is left intact. Shows a prefential cleavage at X-Leu bonds. Cleaves insulin B chain at '29-His-|-Leu-30', '33-Ser-|-His-34', '38-Ala-|-Leu-39' and '40-Tyr-|-Leu-41' bonds. This chain is Zinc metalloproteinase-disintegrin-like brevilysin H2a, found in Gloydius brevicauda (Korean slamosa snake).